The chain runs to 59 residues: Pycsar effector protein MePycTM (59 aa).

A helical transmembrane segment spans residues 36-56; that stretch reads VAVAIYLLGAAMLSSGAAVLA.

The protein resides in the cell membrane. In terms of biological role, pycsar (pyrimidine cyclase system for antiphage resistance) provides immunity against bacteriophage. The pyrimidine cyclase (PycC) synthesizes cyclic nucleotides in response to infection; these serve as specific second messenger signals. The signals activate the adjacent effector, leading to bacterial cell death and abortive phage infection. A clade D Pycsar system. Its function is as follows. The effector gene of a two-gene Pycsar system. Expression of this and adjacent uridylate cyclase MePycC (AC A0A1C5G2V9) probably confers resistance to bacteriophage. The genes are probably only expressed in response to bacteriophage infection. Probably only responds to cUMP (produced by its cognate NTP cyclase), acts by impairing membrane integrity. This is Pycsar effector protein MePycTM from Micromonospora echinofusca.